The following is a 54-amino-acid chain: MDCVLRSYLLLAFGFLICLFLFCLVVFIWFVYKQILFRTTAQSNEARHNHSTVV.

The Lumenal segment spans residues 1–10; that stretch reads MDCVLRSYLL. Residues 11-31 traverse the membrane as a helical segment; the sequence is LAFGFLICLFLFCLVVFIWFV. Topologically, residues 32–54 are cytoplasmic; sequence YKQILFRTTAQSNEARHNHSTVV.

In terms of assembly, homodimer; disulfide-linked.

Its subcellular location is the host rough endoplasmic reticulum membrane. Transports viral genome to neighboring plant cells directly through plasmosdesmata, without any budding. The movement protein allows efficient cell to cell propagation, by bypassing the host cell wall barrier. Two movement proteins, p6, Hsp70h and three structural proteins, CP, CPm, and P64 are essential for cell-cell movement. Also plays a role in virion formation. Together with CPm and p64, encapsidates the 5'-terminal portion of the viral genome. The chain is Movement protein p6 from Beet yellows virus (isolate Ukraine) (BYV).